A 223-amino-acid chain; its full sequence is Thymidine kinase (223 aa).

Residues 19–26 (GPMFAGKT) and 96–99 (DEVQ) each bind ATP. Catalysis depends on Glu-97, which acts as the Proton acceptor. Zn(2+)-binding residues include Cys-153, Cys-156, Cys-191, and His-194.

The protein belongs to the thymidine kinase family. In terms of assembly, homotetramer.

The protein resides in the cytoplasm. The enzyme catalyses thymidine + ATP = dTMP + ADP + H(+). In Ureaplasma parvum serovar 3 (strain ATCC 27815 / 27 / NCTC 11736), this protein is Thymidine kinase.